Here is a 656-residue protein sequence, read N- to C-terminus: Exoribonuclease 2 (656 aa).

One can recognise an RNB domain in the interval 190-518 (RSDLTKTPFF…LNHRLIKSVL (329 aa)). The 86-residue stretch at 564–649 (KWRYKAEIFD…ESGQLIGKLA (86 aa)) folds into the S1 motif domain.

It belongs to the RNR ribonuclease family. RNase II subfamily.

Its subcellular location is the cytoplasm. It catalyses the reaction Exonucleolytic cleavage in the 3'- to 5'-direction to yield nucleoside 5'-phosphates.. Functionally, involved in mRNA degradation. Hydrolyzes single-stranded polyribonucleotides processively in the 3' to 5' direction. This Psychromonas ingrahamii (strain DSM 17664 / CCUG 51855 / 37) protein is Exoribonuclease 2.